Here is a 356-residue protein sequence, read N- to C-terminus: tRNA-specific 2-thiouridylase MnmA 1 (356 aa).

Residues 8 to 15 and Met-34 contribute to the ATP site; that span reads GMSGGVDS. Cys-103 (nucleophile) is an active-site residue. Cysteines 103 and 199 form a disulfide. Gly-127 provides a ligand contact to ATP. An interaction with tRNA region spans residues 149 to 151; it reads KDQ. Cys-199 (cysteine persulfide intermediate) is an active-site residue. The interval 305 to 306 is interaction with tRNA; that stretch reads RY.

This sequence belongs to the MnmA/TRMU family.

It localises to the cytoplasm. It carries out the reaction S-sulfanyl-L-cysteinyl-[protein] + uridine(34) in tRNA + AH2 + ATP = 2-thiouridine(34) in tRNA + L-cysteinyl-[protein] + A + AMP + diphosphate + H(+). In terms of biological role, catalyzes the 2-thiolation of uridine at the wobble position (U34) of tRNA, leading to the formation of s(2)U34. This is tRNA-specific 2-thiouridylase MnmA 1 from Clostridium botulinum (strain Loch Maree / Type A3).